The chain runs to 488 residues: Glutamyl-tRNA(Gln) amidotransferase subunit A (488 aa).

Residues Lys77 and Ser152 each act as charge relay system in the active site. Ser176 functions as the Acyl-ester intermediate in the catalytic mechanism.

This sequence belongs to the amidase family. GatA subfamily. Heterotrimer of A, B and C subunits.

The catalysed reaction is L-glutamyl-tRNA(Gln) + L-glutamine + ATP + H2O = L-glutaminyl-tRNA(Gln) + L-glutamate + ADP + phosphate + H(+). Allows the formation of correctly charged Gln-tRNA(Gln) through the transamidation of misacylated Glu-tRNA(Gln) in organisms which lack glutaminyl-tRNA synthetase. The reaction takes place in the presence of glutamine and ATP through an activated gamma-phospho-Glu-tRNA(Gln). In Streptococcus pyogenes serotype M2 (strain MGAS10270), this protein is Glutamyl-tRNA(Gln) amidotransferase subunit A.